A 276-amino-acid chain; its full sequence is MDFWTAFQAIILGVVEGLTEFLPISSTGHQIIVADLIGFGGERAMAFNIIIQLAAILAVVWEFRSKIFEVVFGLTHQPKARRFTGNLLLAFMPAVVLGVLFADLIHEYLFNPVTVAAALVVGGVIMLWAERRKHRVEVDHVDDMRWSHALKIGFIQCLAMIPGTSRSGSTIIGGLLFGLSRKAATEFSFFLAMPTMVGAAVYSGYKYRDLFQPGDLPVFALGFVTSFIFAMIAVRALLKFIANHSYAAFAWYRIVFGLFILATWQFGWVDWSTAHG.

6 helical membrane-spanning segments follow: residues 43 to 63 (RAMAFNIIIQLAAILAVVWEF), 85 to 105 (GNLLLAFMPAVVLGVLFADLI), 109 to 129 (LFNPVTVAAALVVGGVIMLWA), 183 to 203 (AATEFSFFLAMPTMVGAAVYS), 214 to 234 (GDLPVFALGFVTSFIFAMIAV), and 249 to 269 (FAWYRIVFGLFILATWQFGWV).

It belongs to the UppP family.

Its subcellular location is the cell inner membrane. It carries out the reaction di-trans,octa-cis-undecaprenyl diphosphate + H2O = di-trans,octa-cis-undecaprenyl phosphate + phosphate + H(+). In terms of biological role, catalyzes the dephosphorylation of undecaprenyl diphosphate (UPP). Confers resistance to bacitracin. This chain is Undecaprenyl-diphosphatase, found in Pseudomonas putida (strain ATCC 700007 / DSM 6899 / JCM 31910 / BCRC 17059 / LMG 24140 / F1).